Reading from the N-terminus, the 431-residue chain is Probable amino-acid ABC transporter periplasmic-binding protein y4oP (431 aa).

An N-terminal signal peptide occupies residues 1–25 (MKRRTFTAGLAALPFLGSSLTRAFA).

It belongs to the bacterial solute-binding protein 1 family.

Its subcellular location is the periplasm. Functionally, probably part of the binding-protein-dependent transport system y4oPQRS. This system probably transports a sugar-like molecule. The sequence is that of Probable amino-acid ABC transporter periplasmic-binding protein y4oP from Sinorhizobium fredii (strain NBRC 101917 / NGR234).